The following is a 342-amino-acid chain: Succinylglutamate desuccinylase (342 aa).

Histidine 62, glutamate 65, and histidine 158 together coordinate Zn(2+). Residue glutamate 222 is part of the active site.

It belongs to the AspA/AstE family. Succinylglutamate desuccinylase subfamily. Zn(2+) is required as a cofactor.

The enzyme catalyses N-succinyl-L-glutamate + H2O = L-glutamate + succinate. It functions in the pathway amino-acid degradation; L-arginine degradation via AST pathway; L-glutamate and succinate from L-arginine: step 5/5. Transforms N(2)-succinylglutamate into succinate and glutamate. This is Succinylglutamate desuccinylase from Shewanella frigidimarina (strain NCIMB 400).